The following is a 413-amino-acid chain: Aspartate aminotransferase, cytoplasmic (413 aa).

L-aspartate is bound by residues G39 and W141. S149 is subject to Phosphoserine. Position 195 (N195) interacts with L-aspartate. The residue at position 259 (K259) is an N6-(pyridoxal phosphate)lysine. K318 carries the N6-succinyllysine modification. R387 serves as a coordination point for L-aspartate.

Belongs to the class-I pyridoxal-phosphate-dependent aminotransferase family. In terms of assembly, homodimer. The cofactor is pyridoxal 5'-phosphate. As to expression, expressed in neurons of the retina. Localizes to the inner and outer plexiform layers, the inner and outer nuclear layer and the outer segments of photoreceptors.

It is found in the cytoplasm. It catalyses the reaction L-aspartate + 2-oxoglutarate = oxaloacetate + L-glutamate. The catalysed reaction is L-cysteine + 2-oxoglutarate = 2-oxo-3-sulfanylpropanoate + L-glutamate. The enzyme catalyses (2S)-2-aminobutanoate + 2-oxoglutarate = 2-oxobutanoate + L-glutamate. It carries out the reaction 3-sulfino-L-alanine + 2-oxoglutarate = 3-sulfinopyruvate + L-glutamate. Its activity is regulated as follows. Inhibited by calcium ions. Its function is as follows. Biosynthesis of L-glutamate from L-aspartate or L-cysteine. Important regulator of levels of glutamate, the major excitatory neurotransmitter of the vertebrate central nervous system. Acts as a scavenger of glutamate in brain neuroprotection. The aspartate aminotransferase activity is involved in hepatic glucose synthesis during development and in adipocyte glyceroneogenesis. Using L-cysteine as substrate, regulates levels of mercaptopyruvate, an important source of hydrogen sulfide. Mercaptopyruvate is converted into H(2)S via the action of 3-mercaptopyruvate sulfurtransferase (3MST). Hydrogen sulfide is an important synaptic modulator and neuroprotectant in the brain. The protein is Aspartate aminotransferase, cytoplasmic of Mus musculus (Mouse).